An 83-amino-acid polypeptide reads, in one-letter code: Putative membrane protein insertion efficiency factor (83 aa).

Belongs to the UPF0161 family.

The protein resides in the cell membrane. Functionally, could be involved in insertion of integral membrane proteins into the membrane. This chain is Putative membrane protein insertion efficiency factor, found in Staphylococcus saprophyticus subsp. saprophyticus (strain ATCC 15305 / DSM 20229 / NCIMB 8711 / NCTC 7292 / S-41).